The following is a 184-amino-acid chain: Two-component response regulator ARR5 (184 aa).

The Response regulatory domain maps to 26 to 154; sequence HVLAVDDSMV…DVKRLRDSLM (129 aa). Asp-87 bears the 4-aspartylphosphate mark.

The protein belongs to the ARR family. Type-A subfamily. Two-component system major event consists of a His-to-Asp phosphorelay between a sensor histidine kinase (HK) and a response regulator (RR). In plants, the His-to-Asp phosphorelay involves an additional intermediate named Histidine-containing phosphotransfer protein (HPt). This multistep phosphorelay consists of a His-Asp-His-Asp sequential transfer of a phosphate group between first a His and an Asp of the HK protein, followed by the transfer to a conserved His of the HPt protein and finally the transfer to an Asp in the receiver domain of the RR protein. Predominantly expressed in roots and shoot apical meristems.

Its subcellular location is the nucleus. Functions as a response regulator involved in His-to-Asp phosphorelay signal transduction system. Phosphorylation of the Asp residue in the receiver domain activates the ability of the protein to promote the transcription of target genes. Type-A response regulators seem to act as negative regulators of the cytokinin signaling. The protein is Two-component response regulator ARR5 (ARR5) of Arabidopsis thaliana (Mouse-ear cress).